Reading from the N-terminus, the 69-residue chain is Putative membrane protein insertion efficiency factor (69 aa).

This sequence belongs to the UPF0161 family.

Its subcellular location is the cell membrane. Functionally, could be involved in insertion of integral membrane proteins into the membrane. The protein is Putative membrane protein insertion efficiency factor of Caldanaerobacter subterraneus subsp. tengcongensis (strain DSM 15242 / JCM 11007 / NBRC 100824 / MB4) (Thermoanaerobacter tengcongensis).